A 505-amino-acid polypeptide reads, in one-letter code: Maturase K (505 aa).

Belongs to the intron maturase 2 family. MatK subfamily.

The protein localises to the plastid. The protein resides in the chloroplast. In terms of biological role, usually encoded in the trnK tRNA gene intron. Probably assists in splicing its own and other chloroplast group II introns. The sequence is that of Maturase K from Kunzea capitata (Pink kunzea).